Reading from the N-terminus, the 75-residue chain is Small ribosomal subunit protein bS18 (75 aa).

Belongs to the bacterial ribosomal protein bS18 family. Part of the 30S ribosomal subunit. Forms a tight heterodimer with protein bS6.

In terms of biological role, binds as a heterodimer with protein bS6 to the central domain of the 16S rRNA, where it helps stabilize the platform of the 30S subunit. The sequence is that of Small ribosomal subunit protein bS18 from Hydrogenovibrio crunogenus (strain DSM 25203 / XCL-2) (Thiomicrospira crunogena).